The sequence spans 360 residues: Phenylalanine--tRNA ligase alpha subunit (360 aa).

E260 is a binding site for Mg(2+).

It belongs to the class-II aminoacyl-tRNA synthetase family. Phe-tRNA synthetase alpha subunit type 1 subfamily. In terms of assembly, tetramer of two alpha and two beta subunits. Mg(2+) serves as cofactor.

Its subcellular location is the cytoplasm. It catalyses the reaction tRNA(Phe) + L-phenylalanine + ATP = L-phenylalanyl-tRNA(Phe) + AMP + diphosphate + H(+). The polypeptide is Phenylalanine--tRNA ligase alpha subunit (Sinorhizobium fredii (strain NBRC 101917 / NGR234)).